The sequence spans 520 residues: Probable glycine dehydrogenase (decarboxylating) subunit 2 (520 aa).

The tract at residues 1-29 is disordered; that stretch reads MWRQSRWNEPLITEMSRRGRRGALPPRPD. Position 279 is an N6-(pyridoxal phosphate)lysine (lysine 279).

The protein belongs to the GcvP family. C-terminal subunit subfamily. The glycine cleavage system is composed of four proteins: P, T, L and H. In this organism, the P 'protein' is a heterodimer of two subunits. Pyridoxal 5'-phosphate serves as cofactor.

The catalysed reaction is N(6)-[(R)-lipoyl]-L-lysyl-[glycine-cleavage complex H protein] + glycine + H(+) = N(6)-[(R)-S(8)-aminomethyldihydrolipoyl]-L-lysyl-[glycine-cleavage complex H protein] + CO2. Functionally, the glycine cleavage system catalyzes the degradation of glycine. The P protein binds the alpha-amino group of glycine through its pyridoxal phosphate cofactor; CO(2) is released and the remaining methylamine moiety is then transferred to the lipoamide cofactor of the H protein. In Aeropyrum pernix (strain ATCC 700893 / DSM 11879 / JCM 9820 / NBRC 100138 / K1), this protein is Probable glycine dehydrogenase (decarboxylating) subunit 2.